The chain runs to 31 residues: GIPCAESCVWIPCTVTALLGCSCKDKVCYLD.

The cyclopeptide (Gly-Asp) cross-link spans 1–31 (GIPCAESCVWIPCTVTALLGCSCKDKVCYLD). Intrachain disulfides connect Cys-4/Cys-21, Cys-8/Cys-23, and Cys-13/Cys-28.

Contains 3 disulfide bonds. In terms of processing, this is a cyclic peptide.

Probably participates in a plant defense mechanism. The chain is Cyclotide cter-E from Clitoria ternatea (Butterfly pea).